We begin with the raw amino-acid sequence, 283 residues long: Bifunctional protein FolD 2 (283 aa).

NADP(+) is bound by residues 165-167 (GAS), Ser-190, and Ile-231.

Belongs to the tetrahydrofolate dehydrogenase/cyclohydrolase family. As to quaternary structure, homodimer.

It carries out the reaction (6R)-5,10-methylene-5,6,7,8-tetrahydrofolate + NADP(+) = (6R)-5,10-methenyltetrahydrofolate + NADPH. The catalysed reaction is (6R)-5,10-methenyltetrahydrofolate + H2O = (6R)-10-formyltetrahydrofolate + H(+). It functions in the pathway one-carbon metabolism; tetrahydrofolate interconversion. Its function is as follows. Catalyzes the oxidation of 5,10-methylenetetrahydrofolate to 5,10-methenyltetrahydrofolate and then the hydrolysis of 5,10-methenyltetrahydrofolate to 10-formyltetrahydrofolate. The sequence is that of Bifunctional protein FolD 2 from Bordetella pertussis (strain Tohama I / ATCC BAA-589 / NCTC 13251).